A 112-amino-acid chain; its full sequence is Protein lin-52 homolog (112 aa).

The protein belongs to the lin-52 family. Component of the DREAM complex.

This chain is Protein lin-52 homolog (LIN52), found in Gallus gallus (Chicken).